The following is a 166-amino-acid chain: Ubiquitin-conjugating enzyme E2 7 (166 aa).

Position 2 is an N-acetylalanine (alanine 2). One can recognise a UBC core domain in the interval 4–164 (QASLLLQKQL…VSRCVRKSQE (161 aa)). The active-site Glycyl thioester intermediate is cysteine 89.

Belongs to the ubiquitin-conjugating enzyme family.

The enzyme catalyses S-ubiquitinyl-[E1 ubiquitin-activating enzyme]-L-cysteine + [E2 ubiquitin-conjugating enzyme]-L-cysteine = [E1 ubiquitin-activating enzyme]-L-cysteine + S-ubiquitinyl-[E2 ubiquitin-conjugating enzyme]-L-cysteine.. It participates in protein modification; protein ubiquitination. In terms of biological role, accepts the ubiquitin from the E1 complex and catalyzes its covalent attachment to other proteins. Involved in the formation of multiubiquitin chains. Signal the protein for selective degradation. This chain is Ubiquitin-conjugating enzyme E2 7 (UBC7), found in Arabidopsis thaliana (Mouse-ear cress).